The following is a 207-amino-acid chain: Small ribosomal subunit protein uS4A (207 aa).

Residues 98–161 (RRLDNVVYRM…REHKRIKELA (64 aa)) form the S4 RNA-binding domain.

It belongs to the universal ribosomal protein uS4 family. In terms of assembly, part of the 30S ribosomal subunit. Contacts protein S5. The interaction surface between S4 and S5 is involved in control of translational fidelity.

In terms of biological role, one of the primary rRNA binding proteins, it binds directly to 16S rRNA where it nucleates assembly of the body of the 30S subunit. Functionally, with S5 and S12 plays an important role in translational accuracy. The polypeptide is Small ribosomal subunit protein uS4A (Symbiobacterium thermophilum (strain DSM 24528 / JCM 14929 / IAM 14863 / T)).